The sequence spans 338 residues: Fructose-1,6-bisphosphatase class 1 (338 aa).

Mg(2+) contacts are provided by Glu92, Asp113, Leu115, and Asp116. Substrate contacts are provided by residues 116–119 (DGSS), Asn208, and Lys274. Residue Glu280 participates in Mg(2+) binding.

It belongs to the FBPase class 1 family. Homotetramer. Requires Mg(2+) as cofactor.

Its subcellular location is the cytoplasm. The catalysed reaction is beta-D-fructose 1,6-bisphosphate + H2O = beta-D-fructose 6-phosphate + phosphate. It participates in carbohydrate biosynthesis; gluconeogenesis. The polypeptide is Fructose-1,6-bisphosphatase class 1 (Paramagnetospirillum magneticum (strain ATCC 700264 / AMB-1) (Magnetospirillum magneticum)).